The primary structure comprises 388 residues: GTPase Obg (388 aa).

An Obg domain is found at 1 to 159 (MKFIDEASIR…RSLRLELLLL (159 aa)). The OBG-type G domain maps to 160 to 333 (ADVGLLGMPN…LSLKLLDYIA (174 aa)). Residues 166-173 (GMPNAGKS), 191-195 (FTTLV), 213-216 (DIPG), 283-286 (NKTD), and 314-316 (SAF) contribute to the GTP site. Mg(2+)-binding residues include serine 173 and threonine 193.

The protein belongs to the TRAFAC class OBG-HflX-like GTPase superfamily. OBG GTPase family. Monomer. It depends on Mg(2+) as a cofactor.

Its subcellular location is the cytoplasm. Functionally, an essential GTPase which binds GTP, GDP and possibly (p)ppGpp with moderate affinity, with high nucleotide exchange rates and a fairly low GTP hydrolysis rate. Plays a role in control of the cell cycle, stress response, ribosome biogenesis and in those bacteria that undergo differentiation, in morphogenesis control. This chain is GTPase Obg, found in Shewanella denitrificans (strain OS217 / ATCC BAA-1090 / DSM 15013).